We begin with the raw amino-acid sequence, 608 residues long: Protoheme IX farnesyltransferase (608 aa).

The interval Met-1–Arg-304 is COX15/CtaA. 17 consecutive transmembrane segments (helical) span residues Ala-10–Val-30, Ala-67–Phe-87, Leu-99–Trp-119, Thr-139–Leu-159, Val-167–Val-187, Val-220–Val-240, Leu-252–Ala-272, Val-277–Leu-297, Val-338–Trp-357, Val-362–Val-384, Leu-411–Leu-431, Leu-432–Leu-452, Ile-460–Gly-480, Tyr-488–Ile-508, Val-530–Leu-550, Leu-555–Leu-575, and Ala-584–Val-604. The interval Ile-339–Arg-606 is protoheme IX prenyltransferase.

This sequence in the N-terminal section; belongs to the COX15/CtaA family. In the C-terminal section; belongs to the UbiA prenyltransferase family. Protoheme IX farnesyltransferase subfamily.

It is found in the cell inner membrane. It catalyses the reaction heme b + (2E,6E)-farnesyl diphosphate + H2O = Fe(II)-heme o + diphosphate. Its pathway is porphyrin-containing compound metabolism; heme O biosynthesis; heme O from protoheme: step 1/1. Its function is as follows. Converts heme B (protoheme IX) to heme O by substitution of the vinyl group on carbon 2 of heme B porphyrin ring with a hydroxyethyl farnesyl side group. In Thermus thermophilus (strain ATCC BAA-163 / DSM 7039 / HB27), this protein is Protoheme IX farnesyltransferase (ctaB).